A 37-amino-acid chain; its full sequence is MSDIN-like toxin proprotein 5 (37 aa).

The propeptide occupies Met1–Pro10. The cyclopeptide (Leu-Pro) cross-link spans Leu11 to Pro20. A propeptide spanning residues Cys21–Cys37 is cleaved from the precursor.

The protein belongs to the MSDIN fungal toxin family. Processed by the macrocyclase-peptidase enzyme POPB to yield a toxic cyclic decapeptide. POPB first removes 10 residues from the N-terminus. Conformational trapping of the remaining peptide forces the enzyme to release this intermediate rather than proceed to macrocyclization. The enzyme rebinds the remaining peptide in a different conformation and catalyzes macrocyclization of the N-terminal 10 residues. Expressed in basidiocarps.

Its function is as follows. Probable toxin that belongs to the MSDIN-like toxin family responsible for a large number of food poisoning cases and deaths. The sequence is that of MSDIN-like toxin proprotein 5 from Amanita exitialis (Guangzhou destroying angel).